The following is a 114-amino-acid chain: Seed trypsin/chymotrypsin inhibitor TI5-72 (114 aa).

The first 28 residues, 1-28, serve as a signal peptide directing secretion; the sequence is MELMNKKVMMKLALMVFLLSFAANVVNA. A propeptide spanning residues 29–42 is cleaved from the precursor; sequence RFDSTSFITQVLSN. Disulfide bonds link Cys50/Cys103, Cys51/Cys66, Cys54/Cys99, Cys56/Cys64, Cys73/Cys80, Cys77/Cys92, and Cys82/Cys90.

The protein belongs to the Bowman-Birk serine protease inhibitor family. As to expression, seed.

Its function is as follows. Inhibitor of trypsin and of chymotrypsin. May function as a natural phytochemical defense against predators. This chain is Seed trypsin/chymotrypsin inhibitor TI5-72 (TI572), found in Pisum sativum (Garden pea).